Here is a 384-residue protein sequence, read N- to C-terminus: S-adenosylmethionine synthase (384 aa).

H15 lines the ATP pocket. Residue D17 coordinates Mg(2+). Residue E43 participates in K(+) binding. Positions 56 and 99 each coordinate L-methionine. The flexible loop stretch occupies residues 99 to 109 (QSPDINQGVDR). Residues 164–166 (DAK), 231–232 (RF), D240, 246–247 (RK), A263, and K267 each bind ATP. D240 contacts L-methionine. Residue K271 participates in L-methionine binding.

The protein belongs to the AdoMet synthase family. In terms of assembly, homotetramer; dimer of dimers. Mg(2+) serves as cofactor. It depends on K(+) as a cofactor.

The protein resides in the cytoplasm. It carries out the reaction L-methionine + ATP + H2O = S-adenosyl-L-methionine + phosphate + diphosphate. Its pathway is amino-acid biosynthesis; S-adenosyl-L-methionine biosynthesis; S-adenosyl-L-methionine from L-methionine: step 1/1. Its function is as follows. Catalyzes the formation of S-adenosylmethionine (AdoMet) from methionine and ATP. The overall synthetic reaction is composed of two sequential steps, AdoMet formation and the subsequent tripolyphosphate hydrolysis which occurs prior to release of AdoMet from the enzyme. This is S-adenosylmethionine synthase from Shewanella woodyi (strain ATCC 51908 / MS32).